We begin with the raw amino-acid sequence, 173 residues long: ATP synthase subunit b (173 aa).

Residues 12–34 (AFGNLYAIGWSAVNFLVLLALMY) traverse the membrane as a helical segment.

This sequence belongs to the ATPase B chain family. As to quaternary structure, F-type ATPases have 2 components, F(1) - the catalytic core - and F(0) - the membrane proton channel. F(1) has five subunits: alpha(3), beta(3), gamma(1), delta(1), epsilon(1). F(0) has three main subunits: a(1), b(2) and c(10-14). The alpha and beta chains form an alternating ring which encloses part of the gamma chain. F(1) is attached to F(0) by a central stalk formed by the gamma and epsilon chains, while a peripheral stalk is formed by the delta and b chains.

It is found in the cell membrane. In terms of biological role, f(1)F(0) ATP synthase produces ATP from ADP in the presence of a proton or sodium gradient. F-type ATPases consist of two structural domains, F(1) containing the extramembraneous catalytic core and F(0) containing the membrane proton channel, linked together by a central stalk and a peripheral stalk. During catalysis, ATP synthesis in the catalytic domain of F(1) is coupled via a rotary mechanism of the central stalk subunits to proton translocation. Functionally, component of the F(0) channel, it forms part of the peripheral stalk, linking F(1) to F(0). The protein is ATP synthase subunit b of Syntrophomonas wolfei subsp. wolfei (strain DSM 2245B / Goettingen).